Here is a 682-residue protein sequence, read N- to C-terminus: Potassium-transporting ATPase ATP-binding subunit (682 aa).

A run of 4 helical transmembrane segments spans residues 34 to 54, 62 to 82, 219 to 239, and 254 to 274; these read PVMF…LAMV, ALFT…ANFA, IALT…TATL, and VLVA…LSAI. The 4-aspartylphosphate intermediate role is filled by D307. Residues D344, E348, 377-384, and K395 contribute to the ATP site; that span reads FTAQSRMS. Residues D518 and D522 each contribute to the Mg(2+) site. Helical transmembrane passes span 588-608, 616-636, and 662-682; these read FAII…LNVM, AILS…PLAL, and LVVP…LGLA.

Belongs to the cation transport ATPase (P-type) (TC 3.A.3) family. Type IA subfamily. The system is composed of three essential subunits: KdpA, KdpB and KdpC.

Its subcellular location is the cell inner membrane. It catalyses the reaction K(+)(out) + ATP + H2O = K(+)(in) + ADP + phosphate + H(+). In terms of biological role, part of the high-affinity ATP-driven potassium transport (or Kdp) system, which catalyzes the hydrolysis of ATP coupled with the electrogenic transport of potassium into the cytoplasm. This subunit is responsible for energy coupling to the transport system and for the release of the potassium ions to the cytoplasm. In Salmonella schwarzengrund (strain CVM19633), this protein is Potassium-transporting ATPase ATP-binding subunit.